The primary structure comprises 88 residues: Elongation factor 1-beta (88 aa).

The protein belongs to the EF-1-beta/EF-1-delta family.

Promotes the exchange of GDP for GTP in EF-1-alpha/GDP, thus allowing the regeneration of EF-1-alpha/GTP that could then be used to form the ternary complex EF-1-alpha/GTP/AAtRNA. This chain is Elongation factor 1-beta (ef1b), found in Archaeoglobus fulgidus (strain ATCC 49558 / DSM 4304 / JCM 9628 / NBRC 100126 / VC-16).